The sequence spans 156 residues: Small ribosomal subunit protein uS7 (156 aa).

It belongs to the universal ribosomal protein uS7 family. As to quaternary structure, part of the 30S ribosomal subunit. Contacts proteins S9 and S11.

Its function is as follows. One of the primary rRNA binding proteins, it binds directly to 16S rRNA where it nucleates assembly of the head domain of the 30S subunit. Is located at the subunit interface close to the decoding center, probably blocks exit of the E-site tRNA. In Bacillus cereus (strain G9842), this protein is Small ribosomal subunit protein uS7.